Reading from the N-terminus, the 95-residue chain is Protein TusB (95 aa).

Belongs to the DsrH/TusB family. In terms of assembly, heterohexamer, formed by a dimer of trimers. The hexameric TusBCD complex contains 2 copies each of TusB, TusC and TusD. The TusBCD complex interacts with TusE.

The protein resides in the cytoplasm. Part of a sulfur-relay system required for 2-thiolation of 5-methylaminomethyl-2-thiouridine (mnm(5)s(2)U) at tRNA wobble positions. The chain is Protein TusB from Salmonella arizonae (strain ATCC BAA-731 / CDC346-86 / RSK2980).